We begin with the raw amino-acid sequence, 532 residues long: MTSTVAHGAGSAGPADDAEPMSARTYQVRTYGCQMNVHDSERMAGLLEAAGYRRAAEGTDADVVVFNTCAVRENADNKLYGNLSHLAPRKRTSPDMQIAVGGCLAQKDRDALLRKAPWVDVVFGTHNIGSLPALLDRARHNRVAQVEIAEALQQFPSSLPSARESAYAAWVSISVGCNNTCTFCIVPSLRGKEIDRSPADILAEVQSLVDTGVVEITLLGQNVNAYGVSFADPALPRNRGAFAELLRACGDIDGLERVRFTSPHPAEFTDDVIEAMAQTPNVCPALHMPLQSGSDRVLRAMRRSYRAERYLGIIERVRAAMPHAAITTDLIVGFPGETEQDFAATLDVVRQARFSAAFTFQYSKRPGTPAAELDGQLPKAVVQERYERLVELQEQISLEGNRAIVGQRVELLVATGEGRKDTLTARMSGRARDGRLVHFRAGDGPVRPGDIVTVEVTDAAPHHLIADGGILAHRRTRAGDAHADGQTVRGIGLGMPGIGRPVVPVAAEATSCGSAGGCGSADGAGSSAGDPQ.

The disordered stretch occupies residues 1-21 (MTSTVAHGAGSAGPADDAEPM). The MTTase N-terminal domain occupies 24-140 (RTYQVRTYGC…LPALLDRARH (117 aa)). [4Fe-4S] cluster contacts are provided by Cys-33, Cys-69, Cys-103, Cys-177, Cys-181, and Cys-184. The 237-residue stretch at 163 to 399 (RESAYAAWVS…VELQEQISLE (237 aa)) folds into the Radical SAM core domain. A TRAM domain is found at 402–470 (RAIVGQRVEL…PHHLIADGGI (69 aa)). Residues 510-532 (TSCGSAGGCGSADGAGSSAGDPQ) are disordered. The span at 523 to 532 (GAGSSAGDPQ) shows a compositional bias: low complexity.

The protein belongs to the methylthiotransferase family. MiaB subfamily. As to quaternary structure, monomer. Requires [4Fe-4S] cluster as cofactor.

It localises to the cytoplasm. The catalysed reaction is N(6)-dimethylallyladenosine(37) in tRNA + (sulfur carrier)-SH + AH2 + 2 S-adenosyl-L-methionine = 2-methylsulfanyl-N(6)-dimethylallyladenosine(37) in tRNA + (sulfur carrier)-H + 5'-deoxyadenosine + L-methionine + A + S-adenosyl-L-homocysteine + 2 H(+). Catalyzes the methylthiolation of N6-(dimethylallyl)adenosine (i(6)A), leading to the formation of 2-methylthio-N6-(dimethylallyl)adenosine (ms(2)i(6)A) at position 37 in tRNAs that read codons beginning with uridine. This is tRNA-2-methylthio-N(6)-dimethylallyladenosine synthase 2 from Mycobacterium marinum (strain ATCC BAA-535 / M).